Consider the following 202-residue polypeptide: Putative NAD(P)H nitroreductase YodC (202 aa).

FMN contacts are provided by residues 11 to 13, 68 to 70, 155 to 156, and R192; these read RAS, QKQ, and GG.

It belongs to the nitroreductase family. Requires FMN as cofactor.

The protein resides in the cytoplasm. Putative nitroreductase that may contribute to the degradation of aromatic compounds. The sequence is that of Putative NAD(P)H nitroreductase YodC (yodC) from Bacillus subtilis (strain 168).